Here is a 342-residue protein sequence, read N- to C-terminus: Flagellar P-ring protein (342 aa).

Residues 1–19 (MKRVFLWLIFVLAFHKLLA) form the signal peptide.

The protein belongs to the FlgI family. In terms of assembly, the basal body constitutes a major portion of the flagellar organelle and consists of four rings (L,P,S, and M) mounted on a central rod.

The protein resides in the periplasm. It is found in the bacterial flagellum basal body. Its function is as follows. Assembles around the rod to form the L-ring and probably protects the motor/basal body from shearing forces during rotation. This Helicobacter pylori (strain G27) protein is Flagellar P-ring protein.